Reading from the N-terminus, the 225-residue chain is Large ribosomal subunit protein bL25 (225 aa).

The disordered stretch occupies residues 206 to 225 (EDSKNKITKDNETNKDKSNL).

Belongs to the bacterial ribosomal protein bL25 family. CTC subfamily. In terms of assembly, part of the 50S ribosomal subunit; part of the 5S rRNA/L5/L18/L25 subcomplex. Contacts the 5S rRNA. Binds to the 5S rRNA independently of L5 and L18.

Functionally, this is one of the proteins that binds to the 5S RNA in the ribosome where it forms part of the central protuberance. The sequence is that of Large ribosomal subunit protein bL25 from Vesicomyosocius okutanii subsp. Calyptogena okutanii (strain HA).